The chain runs to 127 residues: uncharacterized protein (127 aa).

Belongs to the transcriptional regulatory CopG/NikR family.

This is an uncharacterized protein from Methanocaldococcus jannaschii (strain ATCC 43067 / DSM 2661 / JAL-1 / JCM 10045 / NBRC 100440) (Methanococcus jannaschii).